A 1289-amino-acid polypeptide reads, in one-letter code: uncharacterized protein (1289 aa).

The MHD1 domain maps to 615–733 (LDMYDVLKEL…DGMLSYSAQL (119 aa)). Residues 745–774 (DEPSYSLESSDTRSSLSLNNANVNHEKSRS) are disordered. Positions 748–762 (SYSLESSDTRSSLSL) are enriched in low complexity. The C2 domain occupies 834–966 (AQYHSSHNLE…DDGFPIDFSL (133 aa)). Residues 1044–1184 (YDAILPLFDY…KSVSELKDEV (141 aa)) form the MHD2 domain.

Its subcellular location is the cytoplasm. This is an uncharacterized protein from Saccharomyces cerevisiae (strain ATCC 204508 / S288c) (Baker's yeast).